Here is a 166-residue protein sequence, read N- to C-terminus: Cilia- and flagella-associated protein 68 (166 aa).

Mn regions lie at residues 98–109 (TTYDANYSRKKP) and 139–149 (KSTYMTNYSEP).

This sequence belongs to the CFAP68 family. As to quaternary structure, microtubule inner protein component of sperm flagellar doublet microtubules.

It is found in the cytoplasm. The protein localises to the cytoskeleton. It localises to the cilium axoneme. The protein resides in the flagellum axoneme. Its subcellular location is the nucleus. It is found in the cell projection. The protein localises to the cilium. Microtubule inner protein (MIP) part of the dynein-decorated doublet microtubules (DMTs) in cilia axoneme, which is required for motile cilia beating. The sequence is that of Cilia- and flagella-associated protein 68 (Cfap68) from Mus musculus (Mouse).